Consider the following 414-residue polypeptide: MEFVKDLKTPEDYINNELKYGAHNYDPIPVVLKRAKGVFVYDVNDKRYYDFLSAYSSVNQGHCHPDILNAMINQAKNLTICSRAFFSVSLGICERYLTNLLGYDKVLMMNTGAEANETAYKLCRKWGYEVKKIPENMAKIVVCKNNFSGRTLGCISASTTNKCTSNFGPFAPQFSKVPYNDLEALEEELKDPNVCGFIVEPVQGEAGVIVPSDNYLPGVYNLCKKYNVLFVADEVQTGLGRTGKLLCVHHYNVKPDVVLLGKALSGGHYPISAVLANDSVMLVIKPGEHGSTYGGNPLAASICVESLNVLINEKLCENADKLGGPFLEGLKKELKDSKIIRDIRGKGLLCAIEFKNELVNVLDICLKLKENGLITRDVHDKTIRLTPPLCITKEQLDECTEIIVKTVKFFDEKF.

A disulfide bridge links Cys-154 with Cys-163. Residue Lys-262 is modified to N6-(pyridoxal phosphate)lysine.

The protein belongs to the class-III pyridoxal-phosphate-dependent aminotransferase family. As to quaternary structure, homodimer. Pyridoxal 5'-phosphate serves as cofactor. Post-translationally, the disulfide bond between Cys-154 and Cys-163 is reduced by TRX1 which increases OAT catalytic activity.

It is found in the cytoplasm. The catalysed reaction is a 2-oxocarboxylate + L-ornithine = L-glutamate 5-semialdehyde + an L-alpha-amino acid. It catalyses the reaction L-ornithine + 2-oxoglutarate = L-glutamate 5-semialdehyde + L-glutamate. It functions in the pathway amino-acid biosynthesis; L-proline biosynthesis; L-glutamate 5-semialdehyde from L-ornithine: step 1/1. With respect to regulation, unlike for mammalian OATs, activity is increased by TRX1-mediated reduction of the disulfide bond between Cys-154 and Cys-163. Binding to TRX1 may also induce conformational changes that facilitate substrate binding. Catalyzes the transamination of alpha-ketoglutarate with ornithine or N-acetylornithine and of glutamate-5-semialdehyde with glutamate and alanine. The sequence is that of Ornithine aminotransferase from Plasmodium chabaudi chabaudi.